The primary structure comprises 603 residues: Membrane protein insertase YidC (603 aa).

The helical transmembrane segment at 7-27 threads the bilayer; the sequence is FFITIALSVLILAVWQYFYVL. Basic and acidic residues predominate over residues 38-51; it reads RVEQQRVEEQKKAA. Positions 38–76 are disordered; the sequence is RVEQQRVEEQKKAAEAANPGAGTPAPAPGTIPNAPGGDT. The segment covering 52-74 has biased composition (low complexity); the sequence is EAANPGAGTPAPAPGTIPNAPGG. Transmembrane regions (helical) follow at residues 352-372, 378-398, 452-472, 497-517, and 540-560; these read FDLL…FWLI, FLGN…ALFF, WPVA…YITI, LFGL…WPLI, and IFTW…AGLV.

It belongs to the OXA1/ALB3/YidC family. Type 1 subfamily. Interacts with the Sec translocase complex via SecD. Specifically interacts with transmembrane segments of nascent integral membrane proteins during membrane integration.

The protein resides in the cell inner membrane. Its function is as follows. Required for the insertion and/or proper folding and/or complex formation of integral membrane proteins into the membrane. Involved in integration of membrane proteins that insert both dependently and independently of the Sec translocase complex, as well as at least some lipoproteins. Aids folding of multispanning membrane proteins. In Mesorhizobium japonicum (strain LMG 29417 / CECT 9101 / MAFF 303099) (Mesorhizobium loti (strain MAFF 303099)), this protein is Membrane protein insertase YidC.